The sequence spans 1775 residues: Atrochrysone carboxylic acid synthase (1775 aa).

An N-terminal acylcarrier protein transacylase domain (SAT) region spans residues 29-258 (RSQSKTESGW…QLPVYGGLCH (230 aa)). Residues 391 to 821 (DSSIAIVGMA…GGNTSLLIEE (431 aa)) enclose the Ketosynthase family 3 (KS3) domain. Residues Cys564, His699, and His740 each act as for beta-ketoacyl synthase activity in the active site. A malonyl-CoA:ACP transacylase (MAT) domain region spans residues 921 to 1241 (FVFSGQGSFY…MAQLHNLGVD (321 aa)). Positions 1305-1626 (TSLVHRLVCE…RSLINTFFSP (322 aa)) are product template (PT) domain. An N-terminal hotdog fold region spans residues 1309–1455 (HRLVCESVQE…WLEEWSPMTH (147 aa)). The 313-residue stretch at 1309 to 1621 (HRLVCESVQE…FRTFPRSLIN (313 aa)) folds into the PKS/mFAS DH domain. His1341 acts as the Proton acceptor; for dehydratase activity in catalysis. The interval 1472 to 1621 (TANRLSRDMV…FRTFPRSLIN (150 aa)) is C-terminal hotdog fold. Asp1532 acts as the Proton donor; for dehydratase activity in catalysis. The tract at residues 1672 to 1694 (SRTVMDSSDSSPATTLTPPTLPS) is disordered. Residues 1677–1689 (DSSDSSPATTLTP) show a composition bias toward low complexity. The Carrier domain maps to 1698-1775 (STESPIVHRA…DLKAWLIDYC (78 aa)). Ser1735 carries the post-translational modification O-(pantetheine 4'-phosphoryl)serine.

In terms of tissue distribution, endocrocin is specifically produced in conidia.

It catalyses the reaction holo-[ACP] + 8 malonyl-CoA + 8 H(+) = atrochrysone carboxyl-[ACP] + 8 CO2 + 8 CoA + 2 H2O. It participates in secondary metabolite biosynthesis. Non-reducing polyketide synthase; part of the gene cluster that mediates the biosynthesis of endocrocin, a simple anthraquinone interesting for many biotechnological applications. The pathway begins with the synthesis of atrochrysone thioester by the polyketide synthase (PKS) encA. The atrochrysone carboxyl ACP thioesterase encB then breaks the thioester bond and releases the atrochrysone carboxylic acid from encA. The atrochrysone carboxylic acid is then converted to endocrocin anthrone which is further oxidized into endocrocin by the anthrone oxygenase encC. The exact function of encD has not been identified yet, but it negatively regulates endocrocin production, likely through the modification of endocrocin itself. This is Atrochrysone carboxylic acid synthase from Aspergillus fumigatus (strain ATCC MYA-4609 / CBS 101355 / FGSC A1100 / Af293) (Neosartorya fumigata).